A 242-amino-acid polypeptide reads, in one-letter code: Tryptophan synthase alpha chain (242 aa).

Active-site proton acceptor residues include Glu31 and Asp42.

This sequence belongs to the TrpA family. Tetramer of two alpha and two beta chains.

The catalysed reaction is (1S,2R)-1-C-(indol-3-yl)glycerol 3-phosphate + L-serine = D-glyceraldehyde 3-phosphate + L-tryptophan + H2O. The protein operates within amino-acid biosynthesis; L-tryptophan biosynthesis; L-tryptophan from chorismate: step 5/5. The alpha subunit is responsible for the aldol cleavage of indoleglycerol phosphate to indole and glyceraldehyde 3-phosphate. In Staphylococcus aureus (strain MRSA252), this protein is Tryptophan synthase alpha chain.